We begin with the raw amino-acid sequence, 632 residues long: 1,4-alpha-glucan branching enzyme GlgB (632 aa).

D310 acts as the Nucleophile in catalysis. E363 functions as the Proton donor in the catalytic mechanism.

This sequence belongs to the glycosyl hydrolase 13 family. GlgB subfamily. Monomer.

The enzyme catalyses Transfers a segment of a (1-&gt;4)-alpha-D-glucan chain to a primary hydroxy group in a similar glucan chain.. Its pathway is glycan biosynthesis; glycogen biosynthesis. Its function is as follows. Catalyzes the formation of the alpha-1,6-glucosidic linkages in glycogen by scission of a 1,4-alpha-linked oligosaccharide from growing alpha-1,4-glucan chains and the subsequent attachment of the oligosaccharide to the alpha-1,6 position. This Desulfitobacterium hafniense (strain Y51) protein is 1,4-alpha-glucan branching enzyme GlgB.